A 179-amino-acid polypeptide reads, in one-letter code: Bifunctional protein PyrR (179 aa).

The PRPP-binding signature appears at 100–112; sequence VILVDDVLFTGRT.

The protein belongs to the purine/pyrimidine phosphoribosyltransferase family. PyrR subfamily.

The catalysed reaction is UMP + diphosphate = 5-phospho-alpha-D-ribose 1-diphosphate + uracil. Its function is as follows. Regulates the transcription of the pyrimidine nucleotide (pyr) operon in response to exogenous pyrimidines. In terms of biological role, also displays a weak uracil phosphoribosyltransferase activity which is not physiologically significant. This is Bifunctional protein PyrR from Haemophilus influenzae (strain 86-028NP).